We begin with the raw amino-acid sequence, 430 residues long: ATP-dependent RNA helicase cgh-1 (430 aa).

Residues 43-71 (VEFEDFCLGRDLLMGIFEKGWEKPSPIQE) carry the Q motif motif. One can recognise a Helicase ATP-binding domain in the interval 74–244 (IGVALTGQDI…QKHMHKPYEI (171 aa)). 87–94 (AKNGTGKT) serves as a coordination point for ATP. The DEAD box motif lies at 192–195 (DEAD). Residues 254–414 (GVTQYYAFVQ…PIPKTVDPKL (161 aa)) form the Helicase C-terminal domain.

This sequence belongs to the DEAD box helicase family. DDX6/DHH1 subfamily. Interacts with car-1 in a germline ribonucleoprotein complex. Interacts with ifet-1. Interacts with oma-1, which is a component of a ribonucleoprotein complex, in an RNA-dependent manner. In terms of tissue distribution, expression is restricted to two germline precursors Z2 and Z3 in L1 stage hermaphrodites, and is detectable specifically in the gonad at low levels into the L3 stage. Expression is significantly higher during the early L4 stage. In adults, expression remains gonad-specific and was not apparent in the somatically derived uterus. Expressed in germ granules (P granules); when associated with pgl-1.

It is found in the cytoplasm. The catalysed reaction is ATP + H2O = ADP + phosphate + H(+). Functionally, probable RNA helicase required for oocyte and sperm function. Also required to prevent the physiological germline apoptosis mechanism killing essentially all developing oocytes. This is ATP-dependent RNA helicase cgh-1 (cgh-1) from Caenorhabditis elegans.